An 855-amino-acid chain; its full sequence is Axonemal dynein light chain domain-containing protein 1 (855 aa).

Residues 1–17 (MSLPKTPSTPLNSASTS) are compositionally biased toward polar residues. The tract at residues 1–31 (MSLPKTPSTPLNSASTSESKKLVSVATEGTR) is disordered. Coiled-coil stretches lie at residues 316 to 402 (QRIL…WSSA), 451 to 480 (LQKLTQKWRNLVNKFKQEVEEMEESTRETL), and 571 to 596 (SERQYMEEIIKNIQKLYKEYEIRING).

It is found in the cytoplasm. Functionally, may be essential for spermiogenesis and male fertility probably by regulating the manchette dynamics, spermatid head shaping and sperm flagellum assembly. The sequence is that of Axonemal dynein light chain domain-containing protein 1 (AXDND1) from Macaca fascicularis (Crab-eating macaque).